The sequence spans 360 residues: Phospho-N-acetylmuramoyl-pentapeptide-transferase (360 aa).

The next 10 helical transmembrane spans lie at 21 to 41 (YVTFRAILGLLTALIFSLWWG), 74 to 94 (MGGILILAGVFISVLLWGDLA), 97 to 117 (YVWVVLFVLASFGLIGFIDDY), 135 to 155 (ILQSLAALVIAFYLYASADLV), 168 to 188 (IMPQLGGFFIVLAYFTIVGSS), 199 to 219 (GLAIMPTVMVAAAFALIAYLS), 236 to 256 (AGELVIVCTAIVGAGLGFLWF), 263 to 283 (VFMGDVGSLALGAALGVIAVL), 288 to 308 (ILLVIMGGVFVMETVSVILQV), and 338 to 358 (VIVRFWIISLFLVLLGLATLK).

It belongs to the glycosyltransferase 4 family. MraY subfamily. It depends on Mg(2+) as a cofactor.

Its subcellular location is the cell inner membrane. The catalysed reaction is UDP-N-acetyl-alpha-D-muramoyl-L-alanyl-gamma-D-glutamyl-meso-2,6-diaminopimeloyl-D-alanyl-D-alanine + di-trans,octa-cis-undecaprenyl phosphate = di-trans,octa-cis-undecaprenyl diphospho-N-acetyl-alpha-D-muramoyl-L-alanyl-D-glutamyl-meso-2,6-diaminopimeloyl-D-alanyl-D-alanine + UMP. The protein operates within cell wall biogenesis; peptidoglycan biosynthesis. Its function is as follows. Catalyzes the initial step of the lipid cycle reactions in the biosynthesis of the cell wall peptidoglycan: transfers peptidoglycan precursor phospho-MurNAc-pentapeptide from UDP-MurNAc-pentapeptide onto the lipid carrier undecaprenyl phosphate, yielding undecaprenyl-pyrophosphoryl-MurNAc-pentapeptide, known as lipid I. The chain is Phospho-N-acetylmuramoyl-pentapeptide-transferase from Shewanella sediminis (strain HAW-EB3).